Reading from the N-terminus, the 86-residue chain is Small ribosomal subunit protein bS20 (86 aa).

The disordered stretch occupies residues 1 to 22 (MANIASARKRARQAEKNRQHNM).

This sequence belongs to the bacterial ribosomal protein bS20 family.

Binds directly to 16S ribosomal RNA. This is Small ribosomal subunit protein bS20 from Thioalkalivibrio sulfidiphilus (strain HL-EbGR7).